The following is a 236-amino-acid chain: Probable glutathione S-transferase GSTU6 (236 aa).

The 80-residue stretch at Gly-5–Ala-84 folds into the GST N-terminal domain. Glutathione is bound by residues Ser-15, Lys-42, Val-56, and Glu-68–Ser-69. One can recognise a GST C-terminal domain in the interval Asp-94–Leu-228.

Belongs to the GST superfamily. Tau family. As to expression, expressed in seedling shoots and roots.

The enzyme catalyses RX + glutathione = an S-substituted glutathione + a halide anion + H(+). Functionally, conjugation of reduced glutathione to a wide number of exogenous and endogenous hydrophobic electrophiles. This is Probable glutathione S-transferase GSTU6 (GSTU6) from Oryza sativa subsp. japonica (Rice).